The sequence spans 459 residues: Methionine aminopeptidase 2-2 (459 aa).

Residues 1–12 are compositionally biased toward basic and acidic residues; that stretch reads MGSKSPEDHRQG. The interval 1–87 is disordered; it reads MGSKSPEDHR…KKLSVVQQTS (87 aa). The span at 43–54 shows a compositional bias: acidic residues; sequence GQDEDGDDDDDE. The span at 55 to 66 shows a compositional bias: basic and acidic residues; that stretch reads KTGIDLKTNDGA. The span at 67 to 79 shows a compositional bias: basic residues; the sequence is KKKRKRNKKKSKK. A substrate-binding site is contributed by histidine 210. A divalent metal cation-binding residues include aspartate 231, aspartate 242, and histidine 311. Histidine 319 contributes to the substrate binding site. Positions 344 and 440 each coordinate a divalent metal cation.

The protein belongs to the peptidase M24A family. Methionine aminopeptidase eukaryotic type 2 subfamily. The cofactor is Co(2+). Zn(2+) serves as cofactor. Requires Mn(2+) as cofactor. Fe(2+) is required as a cofactor.

It is found in the cytoplasm. The enzyme catalyses Release of N-terminal amino acids, preferentially methionine, from peptides and arylamides.. Functionally, cotranslationally removes the N-terminal methionine from nascent proteins. The N-terminal methionine is often cleaved when the second residue in the primary sequence is small and uncharged (Met-Ala-, Cys, Gly, Pro, Ser, Thr, or Val). This Pyrenophora teres f. teres (strain 0-1) (Barley net blotch fungus) protein is Methionine aminopeptidase 2-2.